A 61-amino-acid chain; its full sequence is Small ribosomal subunit protein uS14B (61 aa).

Positions 24, 27, 40, and 43 each coordinate Zn(2+).

The protein belongs to the universal ribosomal protein uS14 family. Zinc-binding uS14 subfamily. In terms of assembly, part of the 30S ribosomal subunit. Contacts proteins S3 and S10. The cofactor is Zn(2+).

Its function is as follows. Binds 16S rRNA, required for the assembly of 30S particles and may also be responsible for determining the conformation of the 16S rRNA at the A site. This chain is Small ribosomal subunit protein uS14B, found in Bacillus licheniformis (strain ATCC 14580 / DSM 13 / JCM 2505 / CCUG 7422 / NBRC 12200 / NCIMB 9375 / NCTC 10341 / NRRL NRS-1264 / Gibson 46).